Consider the following 241-residue polypeptide: L-aspartate dehydrogenase (241 aa).

NAD(+) contacts are provided by residues 10–11 (NI), D28, 56–57 (AS), 63–64 (EY), 78–79 (IS), A109, and N164. H193 is a catalytic residue.

This sequence belongs to the L-aspartate dehydrogenase family. In terms of assembly, homodimer.

The enzyme catalyses L-aspartate + NADP(+) + H2O = oxaloacetate + NH4(+) + NADPH + H(+). It catalyses the reaction L-aspartate + NAD(+) + H2O = oxaloacetate + NH4(+) + NADH + H(+). Its pathway is cofactor biosynthesis; NAD(+) biosynthesis; iminoaspartate from L-aspartate (dehydrogenase route): step 1/1. Competitively inhibited by L-malate and NH(4)(+). Its function is as follows. Specifically catalyzes the NAD or NADP-dependent dehydrogenation of L-aspartate to iminoaspartate. Does not show aspartate oxidase activity. Is also able to catalyze the reverse reaction, i.e. the reductive amination of oxaloacetate. The sequence is that of L-aspartate dehydrogenase from Thermotoga maritima (strain ATCC 43589 / DSM 3109 / JCM 10099 / NBRC 100826 / MSB8).